A 407-amino-acid chain; its full sequence is Lymphocyte transmembrane adapter 1 (407 aa).

The disordered stretch occupies residues 1–25; sequence MYSTPAPPEVTRRNSEPSTRQGTLG. The Extracellular portion of the chain corresponds to 1–33; it reads MYSTPAPPEVTRRNSEPSTRQGTLGSLQGEKGQ. The segment covering 16 to 25 has biased composition (polar residues); that stretch reads EPSTRQGTLG. Residues 34–54 form a helical; Signal-anchor for type III membrane protein membrane-spanning segment; the sequence is IIFPGFVVLLTIILVIIAACI. The Cytoplasmic portion of the chain corresponds to 55-407; sequence LWSWKKQKKR…LATETSDEDA (353 aa). Residues 109–131 are disordered; that stretch reads ESLLSRASDSPEPEAPQANGSLQ. 4 positions are modified to phosphotyrosine: Tyr185, Tyr260, Tyr286, and Tyr353. A disordered region spans residues 331-388; the sequence is SAQSEDSAMVHREEQSSEDSSDYETVLVAELEGRDWKQGPGTQHPSDEGTPGDLAGKL.

When phosphorylated, interacts with GRB2, PIK3R1 and GRAP2. Phosphorylated on tyrosines upon TCR or BCR activation; which leads to the recruitment of GRB2, PIK3R1 and GRAP2. Expressed in T-cells and B-cells.

The protein resides in the cell membrane. In terms of biological role, negatively regulates TCR (T-cell antigen receptor)-mediated signaling in T-cells and BCR (B-cell antigen receptor)-mediated signaling in B-cells. The chain is Lymphocyte transmembrane adapter 1 (Lax1) from Mus musculus (Mouse).